The sequence spans 158 residues: Osmosensory protein A (158 aa).

A Phosphothreonine; by PknD modification is found at T2. In terms of domain architecture, STAS spans 28–139 (AQIRAYLHHL…RSVHKALHDL (112 aa)).

Belongs to the anti-sigma-factor antagonist family. As to quaternary structure, interacts with Rv2638. Phosphorylation abolishes binding to Rv2638. Post-translationally, phosphorylated on Thr-2 by the serine/threonine-protein kinase PknD. Also phosphorylated to a lesser extent by PknB and PknE. Dephosphorylated by PstP.

With respect to regulation, regulated by PknD under osmotic stress. Its function is as follows. Part of a signaling pathway that enables adaptation to osmotic stress through cell wall remodeling and virulence factor production. Unphosphorylated OprA forms a complex with the anti-anti-sigma-factor paralog Rv2638 that dissociates on OprA phosphorylation by PknD. Phosphorylation of OprA may stimulate the release of SigF from an inhibitory complex and enable the transcription of osmotically regulated genes, such as oprA and the ESX-1-associated virulence factor espA. This chain is Osmosensory protein A, found in Mycobacterium tuberculosis (strain ATCC 25618 / H37Rv).